The chain runs to 309 residues: Isoaspartyl peptidase/L-asparaginase (309 aa).

Catalysis depends on threonine 166, which acts as the Nucleophile. Residues 194–197 and 217–220 contribute to the substrate site; these read RVGD and TGHG.

It belongs to the Ntn-hydrolase family. In terms of assembly, heterodimer of an alpha and beta chain produced by autocleavage. Cleaved into an alpha and beta chain by autocatalysis; this activates the enzyme. The N-terminal residue of the beta subunit is responsible for the nucleophile hydrolase activity.

The protein resides in the cytoplasm. The catalysed reaction is L-asparagine + H2O = L-aspartate + NH4(+). The enzyme catalyses Cleavage of a beta-linked Asp residue from the N-terminus of a polypeptide.. Has both L-asparaginase and beta-aspartyl peptidase activity. Does not have aspartylglucosaminidase activity and is inactive toward GlcNAc-L-Asn. Likewise, has no activity toward glutamine. The chain is Isoaspartyl peptidase/L-asparaginase (asrgl1) from Xenopus laevis (African clawed frog).